The primary structure comprises 392 residues: uncharacterized protein (392 aa).

The N-terminal 34 residues, 1-34 (MCISSSSLLCGINSLKYASNRVGILIPPFQTASS), are a transit peptide targeting the mitochondrion. The next 8 helical transmembrane spans lie at 115 to 135 (VAIMVAVIVCLVNGVVFWHWD), 150 to 172 (FRFMMTHAQASLFNLYEGRWWTL), 185 to 205 (LLVNCVAIYSFLSIVVYKFGV), 208 to 225 (ALSVYLGAGVFGNYVALQ), 277 to 297 (ATFVPQSWATGLLGASGAVYA), 299 to 319 (AAIFACLFPYTEFFLFFVYPV), 321 to 341 (AGIFMPLDFIAEYVLCLLNYE), and 350 to 370 (AHVSGTFFGVVSSLFLLPAMW). Serine 292 functions as the Nucleophile in the catalytic mechanism. The active site involves histidine 351.

The protein belongs to the peptidase S54 family.

The protein localises to the mitochondrion inner membrane. This is an uncharacterized protein from Schizosaccharomyces pombe (strain 972 / ATCC 24843) (Fission yeast).